The chain runs to 459 residues: tRNA modification GTPase MnmE (459 aa).

Residues Arg22, Glu87, and Arg126 each coordinate (6S)-5-formyl-5,6,7,8-tetrahydrofolate. Residues 221 to 381 (GINVAICGKP…LEESIEKAVL (161 aa)) form the TrmE-type G domain. Asn231 provides a ligand contact to K(+). GTP-binding positions include 231-236 (NVGKSS), 250-256 (TSIPGTT), and 275-278 (DTAG). Ser235 is a Mg(2+) binding site. K(+)-binding residues include Thr250, Ile252, and Thr255. Thr256 serves as a coordination point for Mg(2+). Lys459 contacts (6S)-5-formyl-5,6,7,8-tetrahydrofolate.

The protein belongs to the TRAFAC class TrmE-Era-EngA-EngB-Septin-like GTPase superfamily. TrmE GTPase family. In terms of assembly, homodimer. Heterotetramer of two MnmE and two MnmG subunits. K(+) serves as cofactor.

The protein resides in the cytoplasm. Functionally, exhibits a very high intrinsic GTPase hydrolysis rate. Involved in the addition of a carboxymethylaminomethyl (cmnm) group at the wobble position (U34) of certain tRNAs, forming tRNA-cmnm(5)s(2)U34. This is tRNA modification GTPase MnmE from Syntrophomonas wolfei subsp. wolfei (strain DSM 2245B / Goettingen).